Here is a 365-residue protein sequence, read N- to C-terminus: Peptide chain release factor 2 (365 aa).

Position 251 is an N5-methylglutamine (Q251).

It belongs to the prokaryotic/mitochondrial release factor family. In terms of processing, methylated by PrmC. Methylation increases the termination efficiency of RF2.

The protein localises to the cytoplasm. Its function is as follows. Peptide chain release factor 2 directs the termination of translation in response to the peptide chain termination codons UGA and UAA. The sequence is that of Peptide chain release factor 2 from Campylobacter jejuni subsp. jejuni serotype O:2 (strain ATCC 700819 / NCTC 11168).